Consider the following 415-residue polypeptide: Coiled-coil domain-containing glutamate-rich protein 1 (415 aa).

Residues methionine 1–proline 11 are compositionally biased toward basic and acidic residues. 5 disordered regions span residues methionine 1–serine 20, phenylalanine 29–glycine 64, arginine 133–valine 162, glutamine 202–aspartate 241, and proline 255–methionine 372. Basic residues-rich tracts occupy residues proline 31–tyrosine 46 and proline 135–alanine 156. Coiled coils occupy residues glutamate 197–serine 224 and aspartate 264–asparagine 366. A compositionally biased stretch (low complexity) spans alanine 211–alanine 220. Residues valine 275–glutamate 363 are compositionally biased toward acidic residues.

Its subcellular location is the nucleus. Functionally, regulator of histone epigenetic modifications and chromatin compaction into the sperm head, required for histone-to-protamine (HTP) transition. HTP is a key event in which somatic histones are first replaced by testis-specific histone variants, then transition proteins (TNPs) are incorporated into the spermatid nucleus, and finally protamines (PRMs) replace the TNPs to promote chromatin condensation. The chain is Coiled-coil domain-containing glutamate-rich protein 1 (CCER1) from Bos taurus (Bovine).